Consider the following 556-residue polypeptide: Butanoate--CoA ligase AAE1 (556 aa).

The Microbody targeting signal signature appears at 554 to 556; that stretch reads SKL.

It belongs to the ATP-dependent AMP-binding enzyme family. As to expression, expressed in roots, leaves, stems, flowers and developing seeds.

The protein localises to the peroxisome. It catalyses the reaction butanoate + ATP + CoA = butanoyl-CoA + AMP + diphosphate. The catalysed reaction is hexanoate + ATP + CoA = hexanoyl-CoA + AMP + diphosphate. It carries out the reaction pentanoate + ATP + CoA = pentanoyl-CoA + AMP + diphosphate. The enzyme catalyses 4-methylpentanoate + ATP + CoA = 4-methylpentanoyl-CoA + AMP + diphosphate. Catalyzes the ligation of CoA on butanoate to produce butanoyl-CoA. Can also use hexanoate, pentanoate and 4-methylpentanoate as substrates with a lower efficiency. This is Butanoate--CoA ligase AAE1 from Arabidopsis thaliana (Mouse-ear cress).